The following is a 484-amino-acid chain: T-complex protein 1 subunit delta (484 aa).

It belongs to the TCP-1 chaperonin family. As to quaternary structure, component of the T-complex protein 1 (TCP1) complex.

The protein localises to the cytoplasm. Functionally, molecular chaperone; assists the folding of proteins upon ATP hydrolysis. This is T-complex protein 1 subunit delta (CCT4) from Encephalitozoon cuniculi (strain GB-M1) (Microsporidian parasite).